Here is a 637-residue protein sequence, read N- to C-terminus: Probable potassium transport system protein Kup (637 aa).

The next 12 helical transmembrane spans lie at Ile-25–Ile-45, Val-62–Leu-82, Trp-115–Thr-135, Ile-149–Leu-169, Val-180–Leu-200, Leu-227–Tyr-247, Ile-263–Phe-283, Leu-295–Ala-315, Ile-352–Phe-372, Leu-378–Tyr-398, Leu-410–Ser-430, and Leu-434–Thr-454.

The protein belongs to the HAK/KUP transporter (TC 2.A.72) family.

Its subcellular location is the cell inner membrane. The catalysed reaction is K(+)(in) + H(+)(in) = K(+)(out) + H(+)(out). Functionally, transport of potassium into the cell. Likely operates as a K(+):H(+) symporter. The chain is Probable potassium transport system protein Kup from Chlorobium phaeobacteroides (strain DSM 266 / SMG 266 / 2430).